The chain runs to 217 residues: Probable GTP-binding protein EngB (217 aa).

An EngB-type G domain is found at 44 to 217; the sequence is DRVEVCFAGR…TLRSIIAHLE (174 aa). Residues 52 to 59, 79 to 83, 97 to 100, 164 to 167, and 198 to 200 contribute to the GTP site; these read GRSNVGKS, GRTQE, DLPG, TKAD, and TSS. Residues S59 and T81 each coordinate Mg(2+).

Belongs to the TRAFAC class TrmE-Era-EngA-EngB-Septin-like GTPase superfamily. EngB GTPase family. Requires Mg(2+) as cofactor.

Necessary for normal cell division and for the maintenance of normal septation. In Ruegeria pomeroyi (strain ATCC 700808 / DSM 15171 / DSS-3) (Silicibacter pomeroyi), this protein is Probable GTP-binding protein EngB.